The primary structure comprises 264 residues: Small ribosomal subunit protein uS2 (264 aa).

It belongs to the universal ribosomal protein uS2 family.

This Helicobacter pylori (strain ATCC 700392 / 26695) (Campylobacter pylori) protein is Small ribosomal subunit protein uS2 (rpsB).